A 192-amino-acid chain; its full sequence is Xanthine phosphoribosyltransferase (192 aa).

Xanthine is bound by residues Leu20 and Asn27. Residue 128–132 (AHGEA) coordinates 5-phospho-alpha-D-ribose 1-diphosphate. Lys156 is a binding site for xanthine.

This sequence belongs to the purine/pyrimidine phosphoribosyltransferase family. Xpt subfamily. Homodimer.

It localises to the cytoplasm. The enzyme catalyses XMP + diphosphate = xanthine + 5-phospho-alpha-D-ribose 1-diphosphate. It functions in the pathway purine metabolism; XMP biosynthesis via salvage pathway; XMP from xanthine: step 1/1. Its function is as follows. Converts the preformed base xanthine, a product of nucleic acid breakdown, to xanthosine 5'-monophosphate (XMP), so it can be reused for RNA or DNA synthesis. This is Xanthine phosphoribosyltransferase from Lactobacillus gasseri (strain ATCC 33323 / DSM 20243 / BCRC 14619 / CIP 102991 / JCM 1131 / KCTC 3163 / NCIMB 11718 / NCTC 13722 / AM63).